The primary structure comprises 178 residues: Inorganic pyrophosphatase (178 aa).

Lys30, Arg44, and Tyr56 together coordinate substrate. The Mg(2+) site is built by Asp66, Asp71, and Asp103. Tyr140 is a binding site for substrate.

It belongs to the PPase family. Homohexamer. Requires Mg(2+) as cofactor.

It is found in the cytoplasm. The catalysed reaction is diphosphate + H2O = 2 phosphate + H(+). Catalyzes the hydrolysis of inorganic pyrophosphate (PPi) forming two phosphate ions. The chain is Inorganic pyrophosphatase from Thermococcus kodakarensis (strain ATCC BAA-918 / JCM 12380 / KOD1) (Pyrococcus kodakaraensis (strain KOD1)).